We begin with the raw amino-acid sequence, 174 residues long: Peroxisome assembly protein 22 (174 aa).

The helical transmembrane segment at 9-27 threads the bilayer; the sequence is GYLAIIAAVSIGAAAYLWW.

This sequence belongs to the peroxin-22 family.

It is found in the peroxisome membrane. Its function is as follows. Involved in peroxisome biogenesis. This is Peroxisome assembly protein 22 (PEX22) from Candida glabrata (strain ATCC 2001 / BCRC 20586 / JCM 3761 / NBRC 0622 / NRRL Y-65 / CBS 138) (Yeast).